We begin with the raw amino-acid sequence, 321 residues long: Lipoyl synthase (321 aa).

[4Fe-4S] cluster-binding residues include C68, C73, C79, C94, C98, C101, and S308. The Radical SAM core domain occupies 80 to 297; the sequence is FNHGTATFMI…KVLADELGFT (218 aa).

The protein belongs to the radical SAM superfamily. Lipoyl synthase family. [4Fe-4S] cluster serves as cofactor.

Its subcellular location is the cytoplasm. The enzyme catalyses [[Fe-S] cluster scaffold protein carrying a second [4Fe-4S](2+) cluster] + N(6)-octanoyl-L-lysyl-[protein] + 2 oxidized [2Fe-2S]-[ferredoxin] + 2 S-adenosyl-L-methionine + 4 H(+) = [[Fe-S] cluster scaffold protein] + N(6)-[(R)-dihydrolipoyl]-L-lysyl-[protein] + 4 Fe(3+) + 2 hydrogen sulfide + 2 5'-deoxyadenosine + 2 L-methionine + 2 reduced [2Fe-2S]-[ferredoxin]. Its pathway is protein modification; protein lipoylation via endogenous pathway; protein N(6)-(lipoyl)lysine from octanoyl-[acyl-carrier-protein]: step 2/2. Its function is as follows. Catalyzes the radical-mediated insertion of two sulfur atoms into the C-6 and C-8 positions of the octanoyl moiety bound to the lipoyl domains of lipoate-dependent enzymes, thereby converting the octanoylated domains into lipoylated derivatives. In Shewanella sp. (strain ANA-3), this protein is Lipoyl synthase.